A 487-amino-acid polypeptide reads, in one-letter code: N-succinylglutamate 5-semialdehyde dehydrogenase (487 aa).

221–226 (GSSRTG) serves as a coordination point for NAD(+). Active-site residues include E244 and C278.

It belongs to the aldehyde dehydrogenase family. AstD subfamily.

It carries out the reaction N-succinyl-L-glutamate 5-semialdehyde + NAD(+) + H2O = N-succinyl-L-glutamate + NADH + 2 H(+). The protein operates within amino-acid degradation; L-arginine degradation via AST pathway; L-glutamate and succinate from L-arginine: step 4/5. Its function is as follows. Catalyzes the NAD-dependent reduction of succinylglutamate semialdehyde into succinylglutamate. This chain is N-succinylglutamate 5-semialdehyde dehydrogenase, found in Pseudomonas putida (strain GB-1).